A 138-amino-acid polypeptide reads, in one-letter code: HTH-type transcriptional regulator CymR (138 aa).

Positions Lys2–Ser125 constitute an HTH rrf2-type domain. The H-T-H motif DNA-binding region spans Leu28–Asn51.

As to quaternary structure, homodimer. Forms homotetramers at higher concentrations of protein. Forms CymR(2):CysK(2) or CymR(4):CysK(4) complexes in the absence of O-acetylserine.

In terms of biological role, master repressor of cysteine metabolism in B.subtilis. Controls the expression of genes involved either in cysteine synthesis from sulfide (cysK), sulfonates (ssu), or methionine (mccAB) or in cystine uptake (tcyP). Activity of CymR is positively regulated by CysK in response to cysteine availability. When cysteine is present, the pool of O-acetylserine (OAS) is low, which leads to the formation of a CymR-CysK complex and transcriptional repression of the CymR regulon occurs. In the absence of cysteine, the OAS pool is high and the CymR-CysK complex is mostly dissociated, leading to a faster dissociation of CymR from its DNA targets and the lifting of CymR-dependent repression. The sequence is that of HTH-type transcriptional regulator CymR (cymR) from Bacillus subtilis (strain 168).